We begin with the raw amino-acid sequence, 511 residues long: Maturase K (511 aa).

Belongs to the intron maturase 2 family. MatK subfamily.

The protein localises to the plastid. Its subcellular location is the chloroplast. Usually encoded in the trnK tRNA gene intron. Probably assists in splicing its own and other chloroplast group II introns. This Maihuenia poeppigii (Hardy cactus) protein is Maturase K.